A 130-amino-acid chain; its full sequence is Odontogenesis associated phosphoprotein (130 aa).

An N-terminal signal peptide occupies residues 1–23 (MARRHCFSYWLLVCWLVVTVAEG).

In terms of tissue distribution, highly expressed in placenta.

Its subcellular location is the secreted. In terms of biological role, may promote nucleation of hydroxyapatite. The sequence is that of Odontogenesis associated phosphoprotein from Homo sapiens (Human).